The chain runs to 349 residues: Heat-inducible transcription repressor HrcA (349 aa).

The protein belongs to the HrcA family.

Its function is as follows. Negative regulator of class I heat shock genes (grpE-dnaK-dnaJ and groELS operons). Prevents heat-shock induction of these operons. The sequence is that of Heat-inducible transcription repressor HrcA from Xylella fastidiosa (strain M23).